A 182-amino-acid polypeptide reads, in one-letter code: Plasmolipin (182 aa).

The interval 1 to 20 (MAEFPSKVSTRTSSPAQGVG) is disordered. The Cytoplasmic portion of the chain corresponds to 1–35 (MAEFPSKVSTRTSSPAQGVGASVSAMRPDLGFVRS). Positions 7–16 (KVSTRTSSPA) are enriched in polar residues. Serine 9 is modified (phosphoserine). Residues 32 to 166 (FVRSALGVLA…SAFFSFQAWR (135 aa)) form the MARVEL domain. A helical transmembrane segment spans residues 36 to 56 (ALGVLALLQLVLGLLVWALIA). At 57–68 (DTPYHLYPAYGW) the chain is on the extracellular side. The chain crosses the membrane as a helical span at residues 69 to 89 (VMFVAVFLWLVTIVFFIIYLF). The Cytoplasmic portion of the chain corresponds to 90–99 (QLHMKLYMVP). A helical transmembrane segment spans residues 100–120 (WPLVLLVFFVAATVLYITAFV). At 121 to 141 (ACAAAVDLTSLRGSRPYNQRS) the chain is on the extracellular side. A helical transmembrane segment spans residues 142–162 (AASFFACLVMIAYGLSAFFSF). The Cytoplasmic segment spans residues 163 to 182 (QAWRGVGSNAATSQMAGGYS).

The protein belongs to the MAL family. Forms oligomers. Phosphorylated. Detected to the sciatic nerve, brain and kidney. In the sciatic nerve, found in Schwann cells; in the brain, in developing oligodendrocytes, especially of the corpus callosum, of cortical white matter, in the optic nerve and in the stratum radiatum and stratum oriens of the hippocampus. In kidney, segregated to the apical surface of renal tubular epithelia.

It localises to the cell membrane. The protein localises to the myelin membrane. It is found in the apical cell membrane. Main component of the myelin sheath that plays an important role in myelin membrane biogenesis and myelination. Plays an essential function in apical endocytosis. Regulates epithelial development through the regulation of apical endocytosis. Part of the intracellular machinery that mediates basolateral-to-apical transport of ICAM-1, an essential adhesion receptor in epithelial cells, from the subapical compartment in hepatic epithelial cells. The sequence is that of Plasmolipin (Pllp) from Rattus norvegicus (Rat).